Here is a 256-residue protein sequence, read N- to C-terminus: uncharacterized protein (256 aa).

An N-terminal signal peptide occupies residues 1 to 24 (MIKRVNKLVLGISLLFLVISITAG). Cys25 carries N-palmitoyl cysteine lipidation. A lipid anchor (S-diacylglycerol cysteine) is attached at Cys25.

It belongs to the staphylococcal tandem lipoprotein family.

Its subcellular location is the cell membrane. This is an uncharacterized protein from Staphylococcus aureus (strain NCTC 8325 / PS 47).